We begin with the raw amino-acid sequence, 464 residues long: Phospho-2-dehydro-3-deoxyheptonate aldolase AroG (464 aa).

Mn(2+) is bound at residue Cys87. Residues Arg126, 285–286, Lys308, and Arg339 contribute to the phosphoenolpyruvate site; that span reads ER. Residues His371, Glu413, and Asp443 each contribute to the Mn(2+) site.

Belongs to the class-II DAHP synthase family. Homodimer. Probably interacts with MSMEG_5536. It depends on Mn(2+) as a cofactor. Requires Co(2+) as cofactor. Cd(2+) is required as a cofactor.

It carries out the reaction D-erythrose 4-phosphate + phosphoenolpyruvate + H2O = 7-phospho-2-dehydro-3-deoxy-D-arabino-heptonate + phosphate. Its pathway is metabolic intermediate biosynthesis; chorismate biosynthesis; chorismate from D-erythrose 4-phosphate and phosphoenolpyruvate: step 1/7. Catalyzes an aldol-like condensation reaction between phosphoenolpyruvate (PEP) and D-erythrose 4-phosphate (E4P) to generate 3-deoxy-D-arabino-heptulosonate 7-phosphate (DAH7P) and inorganic phosphate. The protein is Phospho-2-dehydro-3-deoxyheptonate aldolase AroG (aroG) of Mycolicibacterium smegmatis (strain ATCC 700084 / mc(2)155) (Mycobacterium smegmatis).